A 653-amino-acid chain; its full sequence is Macrolide export ATP-binding/permease protein MacB (653 aa).

The region spanning 6–244 is the ABC transporter domain; it reads LQLTRVTRRF…DAAPDASGGA (239 aa). 42–49 serves as a coordination point for ATP; sequence GASGSGKS. Helical transmembrane passes span 278-298, 526-546, 587-607, and 616-636; these read LLTM…VAIG, LTLL…IGVM, MGGA…SLFV, and AASI…FGFM.

The protein belongs to the ABC transporter superfamily. Macrolide exporter (TC 3.A.1.122) family. As to quaternary structure, homodimer.

It localises to the cell inner membrane. Non-canonical ABC transporter that contains transmembrane domains (TMD), which form a pore in the inner membrane, and an ATP-binding domain (NBD), which is responsible for energy generation. Confers resistance against macrolides. The polypeptide is Macrolide export ATP-binding/permease protein MacB (Burkholderia pseudomallei (strain 1710b)).